A 504-amino-acid chain; its full sequence is Anaerobic nitric oxide reductase transcription regulator NorR (504 aa).

Aspartate 57 is subject to 4-aspartylphosphate. The Sigma-54 factor interaction domain occupies 187-416 (MIGLSPGMTQ…LEHAIHRAVV (230 aa)). ATP-binding positions include 215 to 222 (GETGTGKE) and 278 to 287 (ADNGTLFLDE). Positions 479–498 (WAACARMLETDVANLHRLAK) form a DNA-binding region, H-T-H motif.

The protein operates within nitrogen metabolism; nitric oxide reduction. In terms of biological role, required for the expression of anaerobic nitric oxide (NO) reductase, acts as a transcriptional activator for at least the norVW operon. Activation also requires sigma-54. The protein is Anaerobic nitric oxide reductase transcription regulator NorR of Escherichia coli O9:H4 (strain HS).